The primary structure comprises 80 residues: Defensin-like protein 46 (80 aa).

An N-terminal signal peptide occupies residues 1 to 27; sequence MGSTKTLVTCFLTIILAVSLSNHNVLA. 4 disulfide bridges follow: cysteine 40/cysteine 78, cysteine 44/cysteine 65, cysteine 50/cysteine 76, and cysteine 54/cysteine 77.

This sequence belongs to the DEFL family.

It localises to the secreted. The sequence is that of Defensin-like protein 46 from Arabidopsis thaliana (Mouse-ear cress).